An 864-amino-acid chain; its full sequence is Leucine--tRNA ligase (864 aa).

The 'HIGH' region motif lies at 42 to 52 (PYPSGKLHMGH). Positions 624–628 (KMSKS) match the 'KMSKS' region motif. An ATP-binding site is contributed by K627.

Belongs to the class-I aminoacyl-tRNA synthetase family.

The protein resides in the cytoplasm. It carries out the reaction tRNA(Leu) + L-leucine + ATP = L-leucyl-tRNA(Leu) + AMP + diphosphate. In Burkholderia ambifaria (strain ATCC BAA-244 / DSM 16087 / CCUG 44356 / LMG 19182 / AMMD) (Burkholderia cepacia (strain AMMD)), this protein is Leucine--tRNA ligase.